A 154-amino-acid chain; its full sequence is Putative F-box protein At2g11200 (154 aa).

One can recognise an F-box domain in the interval 5-51 (TTAMSDLPRDLEEEVLSRVQLASLRAVRTTCKKWNRRLSKYRFTKKY).

The protein is Putative F-box protein At2g11200 of Arabidopsis thaliana (Mouse-ear cress).